Consider the following 957-residue polypeptide: UvrABC system protein A (957 aa).

ATP is bound at residue 33-40; that stretch reads GLSGSGKS. The C4-type zinc finger occupies 252–279; that stretch reads CPQCGFSIPELEPRMFSFNSPFGACPTC. 2 consecutive ABC transporter domains span residues 309–587 and 607–935; these read WEPI…AKSL and PNGR…KYLR. 639–646 serves as a coordination point for ATP; that stretch reads GVSGSGKS. The C4-type zinc finger occupies 738–764; the sequence is CEACRGDGIIKIEMHFLPDVYVPCEVC.

Belongs to the ABC transporter superfamily. UvrA family. As to quaternary structure, forms a heterotetramer with UvrB during the search for lesions.

It localises to the cytoplasm. Functionally, the UvrABC repair system catalyzes the recognition and processing of DNA lesions. UvrA is an ATPase and a DNA-binding protein. A damage recognition complex composed of 2 UvrA and 2 UvrB subunits scans DNA for abnormalities. When the presence of a lesion has been verified by UvrB, the UvrA molecules dissociate. In Halalkalibacterium halodurans (strain ATCC BAA-125 / DSM 18197 / FERM 7344 / JCM 9153 / C-125) (Bacillus halodurans), this protein is UvrABC system protein A.